Consider the following 694-residue polypeptide: Voltage-gated chloride channel TMC4 (694 aa).

The disordered stretch occupies residues 1–21; the sequence is MEAWGQSPACSSSRKARTGPS. At 1-150 the chain is on the extracellular side; sequence MEAWGQSPAC…GTESYFSLLR (150 aa). Residues 151–171 traverse the membrane as a helical segment; the sequence is FLLFLNLVASVIEICMKLIPT. Topologically, residues 172 to 231 are cytoplasmic; that stretch reads WLEGAPPGPPGPNISSPCGSYIPHTHGLVAFPTQLFNLLSGEGYLEWSPLFYGFYPPRSN. The helical transmembrane segment at 232–252 threads the bilayer; sequence LAITYLCSVFAISVIYLLCIL. At 253-330 the chain is on the extracellular side; the sequence is RRSVSGLKET…SQRAKVWSMR (78 aa). The chain crosses the membrane as a helical span at residues 331 to 351; the sequence is ALLNVLVLALLGAAFYGIYWA. The Cytoplasmic segment spans residues 352-376; that stretch reads TEYTLTLQETPLVRQTPLFKLLVDY. Residues 377–397 form a helical membrane-spanning segment; that stretch reads LPSIFISLFNFVLPPVFKFIA. Residues 398-407 lie on the Extracellular side of the membrane; that stretch reads SLEGYTQSRQ. A helical transmembrane segment spans residues 408–428; that stretch reads IVLILLRTVFLRLASLVFLLV. The Cytoplasmic segment spans residues 429–465; the sequence is SLWSQITCGGNMEAEGCKACGYNYKEIPCWETRLGQE. Residues 466-486 form a helical membrane-spanning segment; it reads MYKLVLFDLLMGLLVTLLVQF. The Extracellular portion of the chain corresponds to 487-513; that stretch reads PRKILCGLCPGALGRLSGTLEFQVPDE. The chain crosses the membrane as a helical span at residues 514–534; sequence VLGLIYAQTVVWVGSFFCPLL. A topological domain (cytoplasmic) is located at residue Pro535. A helical transmembrane segment spans residues 536–556; that stretch reads LINTAKFLILFCLKKITLFSI. The Extracellular portion of the chain corresponds to 557–574; that stretch reads YSPASRTFRASTANFFFP. A helical transmembrane segment spans residues 575–595; that stretch reads LVLLVGLAISAVPVLYSIFLI. Residues 596–635 are Cytoplasmic-facing; that stretch reads PPSKLCGPFRGKLSIWAQIPEAIESLPQTAQNFLYFLGTQ. The helical transmembrane segment at 636–656 threads the bilayer; it reads AFTVPLLILSSILMMYTVALA. The Extracellular segment spans residues 657–694; it reads NCYGRLISELKRQIETEVQNKVFLAQRAVALSSRNGTS. A glycan (N-linked (GlcNAc...) asparagine) is linked at Asn691.

Belongs to the TMC family. Expressed in taste bud cells of the posterior tongue. Ubiquitously expressed.

Its subcellular location is the membrane. It carries out the reaction chloride(in) = chloride(out). Its function is as follows. Voltage-gated chloride channel involved in high-concentration salt taste sensation. Depolarization induced by high NaCl concentration may trigger the activation of TMC4-mediated chloride influx into taste bud cells, helping the return to resting potential. Also allows permeation of organic anions including gluconate, but their current amplitudes at positive potentials are less than that of chloride. Involved in pH and temperature-dependent modulation of salty taste. The protein is Voltage-gated chloride channel TMC4 of Mus musculus (Mouse).